Reading from the N-terminus, the 332-residue chain is Fructose-1,6-bisphosphatase class 1 (332 aa).

The Mg(2+) site is built by Glu89, Asp110, Leu112, and Asp113. Substrate contacts are provided by residues 113-116, Asn206, Tyr239, 257-259, and Lys269; these read DGSS and YLY. Glu275 lines the Mg(2+) pocket.

Belongs to the FBPase class 1 family. In terms of assembly, homotetramer. Mg(2+) is required as a cofactor.

It is found in the cytoplasm. The enzyme catalyses beta-D-fructose 1,6-bisphosphate + H2O = beta-D-fructose 6-phosphate + phosphate. Its pathway is carbohydrate biosynthesis; gluconeogenesis. In Klebsiella pneumoniae (strain 342), this protein is Fructose-1,6-bisphosphatase class 1.